A 191-amino-acid polypeptide reads, in one-letter code: Ribosomal RNA small subunit methyltransferase G (191 aa).

S-adenosyl-L-methionine-binding positions include glycine 62, leucine 67, 111–112, and arginine 124; that span reads IE.

Belongs to the methyltransferase superfamily. RNA methyltransferase RsmG family.

It localises to the cytoplasm. It catalyses the reaction guanosine(527) in 16S rRNA + S-adenosyl-L-methionine = N(7)-methylguanosine(527) in 16S rRNA + S-adenosyl-L-homocysteine. Functionally, specifically methylates the N7 position of guanine in position 527 of 16S rRNA. In Rickettsia rickettsii (strain Sheila Smith), this protein is Ribosomal RNA small subunit methyltransferase G.